The following is a 160-amino-acid chain: Cyanate hydratase (160 aa).

Residues Arg100, Glu103, and Ser126 contribute to the active site.

The protein belongs to the cyanase family.

It catalyses the reaction cyanate + hydrogencarbonate + 3 H(+) = NH4(+) + 2 CO2. In terms of biological role, catalyzes the reaction of cyanate with bicarbonate to produce ammonia and carbon dioxide. The polypeptide is Cyanate hydratase (Neosartorya fischeri (strain ATCC 1020 / DSM 3700 / CBS 544.65 / FGSC A1164 / JCM 1740 / NRRL 181 / WB 181) (Aspergillus fischerianus)).